An 891-amino-acid chain; its full sequence is Protein SEY1 homolog (891 aa).

Residues 1–754 are Cytoplasmic-facing; the sequence is MNLHLVDSDG…LRAAEAGNQR (754 aa). The GB1/RHD3-type G domain maps to 52–318; that stretch reads GLNYHVVGVF…RCSDYLFSYH (267 aa). Position 62–69 (62–69) interacts with GTP; it reads GGQSSGKS. A helical transmembrane segment spans residues 755–775; it reads LPAWVIPALFILGWNELLYVL. The Lumenal segment spans residues 776–778; it reads TSP. A helical membrane pass occupies residues 779–799; sequence ALLVLVVVICAVFFRQFFVSQ. Residues 800–891 are Cytoplasmic-facing; sequence WHAFEETGPA…MRHRTTHKLD (92 aa). Residues 863–880 are compositionally biased toward polar residues; it reads STHADPAPSNTTVPTAQA. Residues 863-891 are disordered; sequence STHADPAPSNTTVPTAQATMRHRTTHKLD. The span at 882-891 shows a compositional bias: basic residues; the sequence is MRHRTTHKLD.

The protein belongs to the TRAFAC class dynamin-like GTPase superfamily. GB1/RHD3 GTPase family. RHD3 subfamily.

It localises to the endoplasmic reticulum membrane. Functionally, probable GTP-binding protein that may be involved in cell development. This chain is Protein SEY1 homolog, found in Leishmania braziliensis.